The sequence spans 435 residues: Adenylosuccinate synthetase (435 aa).

GTP contacts are provided by residues 22–28 (GDEGKGK) and 50–52 (GHT). Aspartate 23 serves as the catalytic Proton acceptor. Residues aspartate 23 and glycine 50 each coordinate Mg(2+). IMP contacts are provided by residues 23-26 (DEGK), 48-51 (NAGH), threonine 140, arginine 154, glutamine 235, threonine 250, and arginine 314. Histidine 51 (proton donor) is an active-site residue. Position 310-316 (310-316 (ATTGRKR)) interacts with substrate. GTP is bound by residues arginine 316, 342 to 344 (KLD), and 424 to 426 (SVG).

It belongs to the adenylosuccinate synthetase family. In terms of assembly, homodimer. The cofactor is Mg(2+).

It is found in the cytoplasm. The catalysed reaction is IMP + L-aspartate + GTP = N(6)-(1,2-dicarboxyethyl)-AMP + GDP + phosphate + 2 H(+). Its pathway is purine metabolism; AMP biosynthesis via de novo pathway; AMP from IMP: step 1/2. Its function is as follows. Plays an important role in the de novo pathway of purine nucleotide biosynthesis. Catalyzes the first committed step in the biosynthesis of AMP from IMP. The sequence is that of Adenylosuccinate synthetase from Chlorobaculum parvum (strain DSM 263 / NCIMB 8327) (Chlorobium vibrioforme subsp. thiosulfatophilum).